We begin with the raw amino-acid sequence, 188 residues long: UPF0340 protein BH3766 (188 aa).

The protein belongs to the UPF0340 family.

This chain is UPF0340 protein BH3766, found in Halalkalibacterium halodurans (strain ATCC BAA-125 / DSM 18197 / FERM 7344 / JCM 9153 / C-125) (Bacillus halodurans).